Here is a 288-residue protein sequence, read N- to C-terminus: 4-hydroxybenzoate octaprenyltransferase (288 aa).

A run of 8 helical transmembrane segments spans residues 23–43, 46–66, 98–118, 141–161, 163–183, 213–233, 234–254, and 268–288; these read IGSL…GRGI, AKIL…GCVV, ILFV…NSMT, LPQV…FAAV, ESLP…TVAY, LIIG…GWLM, NLGG…THQQ, and AFLN…ISYW.

Belongs to the UbiA prenyltransferase family. It depends on Mg(2+) as a cofactor.

The protein localises to the cell inner membrane. It catalyses the reaction all-trans-octaprenyl diphosphate + 4-hydroxybenzoate = 4-hydroxy-3-(all-trans-octaprenyl)benzoate + diphosphate. It participates in cofactor biosynthesis; ubiquinone biosynthesis. Functionally, catalyzes the prenylation of para-hydroxybenzoate (PHB) with an all-trans polyprenyl group. Mediates the second step in the final reaction sequence of ubiquinone-8 (UQ-8) biosynthesis, which is the condensation of the polyisoprenoid side chain with PHB, generating the first membrane-bound Q intermediate 3-octaprenyl-4-hydroxybenzoate. This is 4-hydroxybenzoate octaprenyltransferase from Yersinia pseudotuberculosis serotype O:1b (strain IP 31758).